The sequence spans 368 residues: 4-hydroxy-3-methylbut-2-en-1-yl diphosphate synthase (flavodoxin) (368 aa).

4 residues coordinate [4Fe-4S] cluster: Cys268, Cys271, Cys303, and Glu310.

The protein belongs to the IspG family. Requires [4Fe-4S] cluster as cofactor.

It catalyses the reaction (2E)-4-hydroxy-3-methylbut-2-enyl diphosphate + oxidized [flavodoxin] + H2O + 2 H(+) = 2-C-methyl-D-erythritol 2,4-cyclic diphosphate + reduced [flavodoxin]. It participates in isoprenoid biosynthesis; isopentenyl diphosphate biosynthesis via DXP pathway; isopentenyl diphosphate from 1-deoxy-D-xylulose 5-phosphate: step 5/6. Functionally, converts 2C-methyl-D-erythritol 2,4-cyclodiphosphate (ME-2,4cPP) into 1-hydroxy-2-methyl-2-(E)-butenyl 4-diphosphate. The sequence is that of 4-hydroxy-3-methylbut-2-en-1-yl diphosphate synthase (flavodoxin) from Listeria monocytogenes serotype 4b (strain F2365).